We begin with the raw amino-acid sequence, 512 residues long: Kynurenine 3-monooxygenase (512 aa).

Belongs to the aromatic-ring hydroxylase family. KMO subfamily. It depends on FAD as a cofactor.

It is found in the mitochondrion outer membrane. It catalyses the reaction L-kynurenine + NADPH + O2 + H(+) = 3-hydroxy-L-kynurenine + NADP(+) + H2O. Its pathway is cofactor biosynthesis; NAD(+) biosynthesis; quinolinate from L-kynurenine: step 1/3. In terms of biological role, catalyzes the hydroxylation of L-kynurenine (L-Kyn) to form 3-hydroxy-L-kynurenine (L-3OHKyn). Required for synthesis of quinolinic acid. The protein is Kynurenine 3-monooxygenase (nic-3) of Neurospora crassa (strain ATCC 24698 / 74-OR23-1A / CBS 708.71 / DSM 1257 / FGSC 987).